A 152-amino-acid chain; its full sequence is Ribosome maturation factor RimP (152 aa).

Belongs to the RimP family.

The protein resides in the cytoplasm. Its function is as follows. Required for maturation of 30S ribosomal subunits. The protein is Ribosome maturation factor RimP of Pseudothermotoga lettingae (strain ATCC BAA-301 / DSM 14385 / NBRC 107922 / TMO) (Thermotoga lettingae).